The primary structure comprises 316 residues: Protoheme IX farnesyltransferase (316 aa).

The segment at 1–21 (MAKSQALGNAPLTSTVAENAT) is disordered. Polar residues predominate over residues 11–21 (PLTSTVAENAT). The next 9 membrane-spanning stretches (helical) occupy residues 42-62 (VVAM…PGIP), 67-87 (VILG…FNHV), 115-135 (VVFA…LNAL), 136-156 (TAWL…VWLK), 163-183 (IVIG…AVTG), 189-209 (ALLL…ALAI), 235-255 (MVLL…LTGM), 256-276 (SGGV…GYAL), and 295-315 (IWHL…TSLM).

It belongs to the UbiA prenyltransferase family. Protoheme IX farnesyltransferase subfamily.

The protein resides in the cell inner membrane. It carries out the reaction heme b + (2E,6E)-farnesyl diphosphate + H2O = Fe(II)-heme o + diphosphate. It participates in porphyrin-containing compound metabolism; heme O biosynthesis; heme O from protoheme: step 1/1. Functionally, converts heme B (protoheme IX) to heme O by substitution of the vinyl group on carbon 2 of heme B porphyrin ring with a hydroxyethyl farnesyl side group. This is Protoheme IX farnesyltransferase from Photobacterium profundum (strain SS9).